The primary structure comprises 285 residues: Glutamate racemase (285 aa).

Substrate-binding positions include 28–29 (DS) and 60–61 (YG). Residue cysteine 92 is the Proton donor/acceptor of the active site. 93–94 (NT) lines the substrate pocket. Catalysis depends on cysteine 204, which acts as the Proton donor/acceptor. 205–206 (TH) is a substrate binding site.

The protein belongs to the aspartate/glutamate racemases family.

It catalyses the reaction L-glutamate = D-glutamate. It participates in cell wall biogenesis; peptidoglycan biosynthesis. Provides the (R)-glutamate required for cell wall biosynthesis. The polypeptide is Glutamate racemase (Escherichia coli O9:H4 (strain HS)).